The sequence spans 206 residues: Probable thymidylate kinase (206 aa).

Position 10–17 (10–17) interacts with ATP; it reads GIDGSGKS.

This sequence belongs to the thymidylate kinase family.

The enzyme catalyses dTMP + ATP = dTDP + ADP. In Methanosarcina acetivorans (strain ATCC 35395 / DSM 2834 / JCM 12185 / C2A), this protein is Probable thymidylate kinase.